The sequence spans 49 residues: MYYAMHELHYSPSQLLELYEAPKHFKALLFGLIGYKLDLLEKESRRGGN.

This is an uncharacterized protein from Bacillus subtilis (strain 168).